Here is a 384-residue protein sequence, read N- to C-terminus: Urea transporter 1 (384 aa).

The segment at 1–23 is disordered; that stretch reads MDDNPTAVKLDQGGNQAPQGQGR. Transmembrane regions (helical) follow at residues 61-81, 85-105, 111-131, 138-158, and 168-188; these read ISQV…VGLL, PWCA…ALLL, AITA…MAIY, FWWL…FSSA, and LPVF…ATGH. N-linked (GlcNAc...) asparagine glycosylation occurs at N206. The next 3 membrane-spanning stretches (helical) occupy residues 237–257, 279–299, and 327–347; these read GGIF…HAAI, GLWG…FMAL, and VVGL…FLLL.

The protein belongs to the urea transporter family. As to quaternary structure, homotrimer; each subunit contains a pore through which urea permeates. Identified in a complex with STOM.

It localises to the cell membrane. The protein resides in the basolateral cell membrane. The enzyme catalyses urea(in) = urea(out). Mediates the transport of urea driven by a concentration gradient across the cell membranes of erythrocytes and the renal inner medullary collecting duct which is critical to the urinary concentrating mechanism. Facilitates water transport in erythrocytes. In Capra hircus (Goat), this protein is Urea transporter 1 (SLC14A1).